The sequence spans 63 residues: uncharacterized protein (63 aa).

Residues 3–23 (IIYIILGFLSLAIGIIGIFPS) form a helical membrane-spanning segment.

The protein resides in the membrane. This is an uncharacterized protein from Haemophilus influenzae (strain ATCC 51907 / DSM 11121 / KW20 / Rd).